Here is a 378-residue protein sequence, read N- to C-terminus: Monomethylxanthine methyltransferase 1 (378 aa).

Positions 18, 61, 66, 100, 101, 139, 140, and 156 each coordinate S-adenosyl-L-homocysteine. The theobromine site is built by Tyr157, His160, and Trp161. Residues Asn178, Asp260, Phe262, and Asn263 each coordinate Mg(2+). Tyr362 contributes to the theobromine binding site.

This sequence belongs to the methyltransferase superfamily. Type-7 methyltransferase family. It depends on Mg(2+) as a cofactor. As to expression, expressed, at low levels, in stems, young leaves, floral buds and immature fruits (grains), but not in roots, old leaves and mature fruits.

It is found in the cytoplasm. It catalyses the reaction 7-methylxanthine + S-adenosyl-L-methionine = theobromine + S-adenosyl-L-homocysteine + H(+). Its pathway is alkaloid biosynthesis. Involved in the biosynthesis of caffeine. Catalyzes the conversion of 7-methylxanthine (7mX) to theobromine and of paraxanthine to caffeine. Has a 5-fold preference for 7mX. In Coffea arabica (Arabian coffee), this protein is Monomethylxanthine methyltransferase 1.